A 153-amino-acid chain; its full sequence is Ribosome maturation factor RimP (153 aa).

The protein belongs to the RimP family.

The protein resides in the cytoplasm. Functionally, required for maturation of 30S ribosomal subunits. This chain is Ribosome maturation factor RimP, found in Solibacter usitatus (strain Ellin6076).